The chain runs to 342 residues: S-adenosylmethionine:tRNA ribosyltransferase-isomerase (342 aa).

It belongs to the QueA family. Monomer.

Its subcellular location is the cytoplasm. The enzyme catalyses 7-aminomethyl-7-carbaguanosine(34) in tRNA + S-adenosyl-L-methionine = epoxyqueuosine(34) in tRNA + adenine + L-methionine + 2 H(+). It participates in tRNA modification; tRNA-queuosine biosynthesis. Transfers and isomerizes the ribose moiety from AdoMet to the 7-aminomethyl group of 7-deazaguanine (preQ1-tRNA) to give epoxyqueuosine (oQ-tRNA). This chain is S-adenosylmethionine:tRNA ribosyltransferase-isomerase, found in Streptococcus pyogenes serotype M49 (strain NZ131).